A 445-amino-acid polypeptide reads, in one-letter code: Phosphoglucosamine mutase (445 aa).

The Phosphoserine intermediate role is filled by serine 102. Residues serine 102, aspartate 241, aspartate 243, and aspartate 245 each coordinate Mg(2+). The residue at position 102 (serine 102) is a Phosphoserine.

The protein belongs to the phosphohexose mutase family. Mg(2+) is required as a cofactor. Post-translationally, activated by phosphorylation.

The enzyme catalyses alpha-D-glucosamine 1-phosphate = D-glucosamine 6-phosphate. In terms of biological role, catalyzes the conversion of glucosamine-6-phosphate to glucosamine-1-phosphate. The sequence is that of Phosphoglucosamine mutase from Haemophilus influenzae (strain ATCC 51907 / DSM 11121 / KW20 / Rd).